A 293-amino-acid chain; its full sequence is Diaminopimelate epimerase (293 aa).

Asn-17, Gln-47, and Asn-67 together coordinate substrate. The active-site Proton donor is Cys-76. Substrate-binding positions include 77 to 78, Asn-164, Asn-197, and 215 to 216; these read GN and ER. Cys-224 serves as the catalytic Proton acceptor. Residue 225–226 coordinates substrate; that stretch reads GS.

This sequence belongs to the diaminopimelate epimerase family. As to quaternary structure, homodimer.

It localises to the cytoplasm. It carries out the reaction (2S,6S)-2,6-diaminopimelate = meso-2,6-diaminopimelate. Its pathway is amino-acid biosynthesis; L-lysine biosynthesis via DAP pathway; DL-2,6-diaminopimelate from LL-2,6-diaminopimelate: step 1/1. Its function is as follows. Catalyzes the stereoinversion of LL-2,6-diaminopimelate (L,L-DAP) to meso-diaminopimelate (meso-DAP), a precursor of L-lysine and an essential component of the bacterial peptidoglycan. The sequence is that of Diaminopimelate epimerase from Rhodopseudomonas palustris (strain ATCC BAA-98 / CGA009).